The sequence spans 108 residues: Ribonuclease P protein component (108 aa).

This sequence belongs to the RnpA family. In terms of assembly, consists of a catalytic RNA component (M1 or rnpB) and a protein subunit.

The catalysed reaction is Endonucleolytic cleavage of RNA, removing 5'-extranucleotides from tRNA precursor.. Functionally, RNaseP catalyzes the removal of the 5'-leader sequence from pre-tRNA to produce the mature 5'-terminus. It can also cleave other RNA substrates such as 4.5S RNA. The protein component plays an auxiliary but essential role in vivo by binding to the 5'-leader sequence and broadening the substrate specificity of the ribozyme. This chain is Ribonuclease P protein component, found in Campylobacter jejuni subsp. doylei (strain ATCC BAA-1458 / RM4099 / 269.97).